The chain runs to 216 residues: GTP cyclohydrolase 1 (216 aa).

Zn(2+) is bound by residues cysteine 108, histidine 111, and cysteine 179.

This sequence belongs to the GTP cyclohydrolase I family. Homomer.

It catalyses the reaction GTP + H2O = 7,8-dihydroneopterin 3'-triphosphate + formate + H(+). It functions in the pathway cofactor biosynthesis; 7,8-dihydroneopterin triphosphate biosynthesis; 7,8-dihydroneopterin triphosphate from GTP: step 1/1. This is GTP cyclohydrolase 1 from Shewanella baltica (strain OS223).